The sequence spans 103 residues: Small ribosomal subunit protein uS10 (103 aa).

It belongs to the universal ribosomal protein uS10 family. Part of the 30S ribosomal subunit.

Involved in the binding of tRNA to the ribosomes. The protein is Small ribosomal subunit protein uS10 of Wigglesworthia glossinidia brevipalpis.